The sequence spans 2241 residues: Large tegument protein deneddylase (2241 aa).

Positions 1–238 (MKVTQASCHQ…IDLTGVVRES (238 aa)) are deubiquitination activity. Positions 4 to 226 (TQASCHQGDI…AARLVSTYRD (223 aa)) constitute a Peptidase C76 domain. Active-site residues include Cys-24, Asp-160, and His-162. Positions 239-314 (ADTAATTTTA…STTSKTLATA (76 aa)) are disordered. The span at 240-250 (DTAATTTTAAP) shows a compositional bias: low complexity. A compositionally biased stretch (pro residues) spans 251-268 (SLPPLPDPIVDPGCPPGV). The segment covering 304–314 (PSTTSKTLATA) has biased composition (low complexity). An interaction with inner tegument protein region spans residues 327–331 (SSAVP). 2 disordered regions span residues 1187-1230 (MTET…PPAD) and 2118-2152 (PIAR…DTSR). 2 stretches are compositionally biased toward basic and acidic residues: residues 1190–1199 (TSERLDRSLR) and 2142–2152 (QIDHAQDDTSR).

The protein belongs to the herpesviridae large tegument protein family. As to quaternary structure, interacts with host CUL1 and CUL4A; these interactions inhibit the E3 ligase activity of cullins. Interacts with inner tegument protein. Interacts with capsid vertex specific component CVC2. Interacts with the major capsid protein/MCP.

The protein resides in the virion tegument. It is found in the host cytoplasm. Its subcellular location is the host nucleus. The catalysed reaction is Thiol-dependent hydrolysis of ester, thioester, amide, peptide and isopeptide bonds formed by the C-terminal Gly of ubiquitin (a 76-residue protein attached to proteins as an intracellular targeting signal).. Functionally, large tegument protein that plays multiple roles in the viral cycle. During viral entry, remains associated with the capsid while most of the tegument is detached and participates in the capsid transport toward the host nucleus. Plays a role in the routing of the capsid at the nuclear pore complex and subsequent uncoating. Within the host nucleus, acts as a deneddylase and promotes the degradation of nuclear CRLs (cullin-RING ubiquitin ligases) and thereby stabilizes nuclear CRL substrates, while cytoplasmic CRLs remain unaffected. These modifications prevent host cell cycle S-phase progression and create a favorable environment allowing efficient viral genome replication. Participates later in the secondary envelopment of capsids. Indeed, plays a linker role for the association of the outer viral tegument to the capsids together with the inner tegument protein. The protein is Large tegument protein deneddylase (UL48) of Homo sapiens (Human).